The following is a 680-amino-acid chain: Coiled-coil domain-containing protein 138 (680 aa).

Position 63 is a phosphothreonine (Thr63). Residue Ser64 is modified to Phosphoserine. Residues 260-339 (KEQHGTEIEH…YEFMTVQRLK (80 aa)) adopt a coiled-coil conformation. A disordered region spans residues 390–410 (EPEEPGVDGGKPPAKPSQRSD). Position 484 is a phosphoserine (Ser484).

The polypeptide is Coiled-coil domain-containing protein 138 (Ccdc138) (Mus musculus (Mouse)).